Here is a 319-residue protein sequence, read N- to C-terminus: Protease HtpX homolog (319 aa).

The next 2 helical transmembrane spans lie at 6–26 and 28–48; these read TAML…VIGG and GGMM…YWNS. Position 130 (H130) interacts with Zn(2+). E131 is a catalytic residue. H134 is a Zn(2+) binding site. Transmembrane regions (helical) follow at residues 145-165 and 172-192; these read LTAT…FFGG and PLGF…AMLV. Position 201 (E201) interacts with Zn(2+). Residues 277–319 form a disordered region; that stretch reads MARETSTGSTAPVRPDNAGRKSRSVPRTGWGRGGSEPPKGPWS.

It belongs to the peptidase M48B family. Zn(2+) serves as cofactor.

The protein localises to the cell inner membrane. This Rhizobium meliloti (strain 1021) (Ensifer meliloti) protein is Protease HtpX homolog.